A 530-amino-acid polypeptide reads, in one-letter code: PC4 and SFRS1-interacting protein (530 aa).

The 64-residue stretch at 1–64 (MTRDFKPGDL…PKDIFPYSEN (64 aa)) folds into the PWWP domain. Residue Lys-75 forms a Glycyl lysine isopeptide (Lys-Gly) (interchain with G-Cter in SUMO2) linkage. Positions 88-349 (PKVKFSSQQA…VEKKRETSMD (262 aa)) are disordered. A compositionally biased stretch (low complexity) spans 93 to 107 (SSQQASAKQSNASSD). Phosphoserine occurs at positions 102, 105, and 106. The span at 113–135 (KETSVSKEDTDPEEKASNEDVTK) shows a compositional bias: basic and acidic residues. Phosphothreonine occurs at positions 115 and 122. Ser-129 is subject to Phosphoserine. Position 141 is a phosphothreonine (Thr-141). Over residues 144-153 (AARRGRKRKA) the composition is skewed to basic residues. The Nuclear localization signal signature appears at 146 to 156 (RRGRKRKAEKQ). Thr-167 carries the post-translational modification Phosphothreonine. 2 positions are modified to phosphoserine: Ser-177 and Ser-206. Basic and acidic residues predominate over residues 213–261 (EEDKSKKKGQEEKQPKKQLKKDEEGQKEEEKPRKEPDKKEGKKEVESKR). Position 271 is a phosphoserine (Ser-271). Thr-272 carries the phosphothreonine modification. Residues Ser-273 and Ser-275 each carry the phosphoserine modification. The segment covering 274-283 (DSEEEGDDQE) has biased composition (acidic residues). Over residues 287 to 302 (KRKGGRNFQTAHRRNM) the composition is skewed to basic residues. The segment covering 305 to 349 (GQHEKEAADRKRKQEEQMETEQQNKDEGKKPEVKKVEKKRETSMD) has biased composition (basic and acidic residues). 2 coiled-coil regions span residues 306–334 (QHEK…EGKK) and 371–395 (NRCI…KHTE). The integrase-binding domain (IBD) stretch occupies residues 340–417 (VEKKRETSMD…VSQVIMEKST (78 aa)). Phosphoserine is present on Ser-434. Position 437 is a phosphothreonine (Thr-437). Residue Ser-443 is modified to Phosphoserine. Over residues 446–473 (EQRQHEEANKTKDQGKKGPNKKLEKEQT) the composition is skewed to basic and acidic residues. Positions 446–530 (EQRQHEEANK…ISLKDSTLDN (85 aa)) are disordered. Residues 474-494 (GSKTLNGGSDAQDSNQPQHNG) show a composition bias toward polar residues. Residues 498 to 530 (EESKDNHEASSKKKPSSEERETEISLKDSTLDN) are compositionally biased toward basic and acidic residues. Ser-514 is modified (phosphoserine). Arg-517 is subject to Citrulline. Ser-522 is subject to Phosphoserine. Thr-527 is modified (phosphothreonine).

It belongs to the HDGF family. Monomer. Interacts with IFRD1/PC4. Interacts (via IBD domain) with POGZ (via IBM motif) and CDCA7L (via IBM motifs). Interacts (via IBD domain) with KMT2A (via IBM motifs) with a moderate affinity whereas interacts with the KMT2A-MEN1 complex with a greater affinity; MEN1 enhances interaction of KMT2A with PSIP1. Interacts (via IBD domain) with IWS1 (via IBM motif), MED1 (via IBM motif) and DBF4 (via IBM motifs). Post-translationally, citrullinated by PADI4.

It localises to the nucleus. Its function is as follows. Transcriptional coactivator involved in neuroepithelial stem cell differentiation and neurogenesis. Involved in particular in lens epithelial cell gene regulation and stress responses. May play an important role in lens epithelial to fiber cell terminal differentiation. May play a protective role during stress-induced apoptosis. The protein is PC4 and SFRS1-interacting protein (PSIP1) of Bos taurus (Bovine).